The sequence spans 175 residues: uncharacterized protein (175 aa).

This is an uncharacterized protein from Escherichia coli.